The sequence spans 368 residues: Proteinase-activated receptor 3 (368 aa).

An N-terminal signal peptide occupies residues 1–21 (MEMKVLILVGVRLLFLPTTVC). Positions 22–37 (QSGMKHVSDNSALTAE) are cleaved as a propeptide — removed for receptor activation. Topologically, residues 38 to 93 (SFNGNEHSFEEFPLSDIEGWTGATTTIKAKCPEESITTLHVNNATMGYLRSSLSTK) are extracellular. The N-linked (GlcNAc...) asparagine glycan is linked to asparagine 80. The chain crosses the membrane as a helical span at residues 94-114 (VIPAIYILVFVIGVPANIVTL). Topologically, residues 115–123 (WKLSSRTKS) are cytoplasmic. Residues 124–144 (ICLVIFHTNLAIADLLFCVTL) form a helical membrane-spanning segment. Residues 145–166 (PFKIAYHLNGNDWVFGEVMCRV) are Extracellular-facing. Cysteine 164 and cysteine 243 form a disulfide bridge. Residues 167–187 (TTVAFYGNMYCAILILTCMGI) form a helical membrane-spanning segment. Residues 188–208 (NRYLATVHPFTYRKLPKRNFT) lie on the Cytoplasmic side of the membrane. Residues 209-229 (LLMCGVVWVMVVLYMLPLAIL) form a helical membrane-spanning segment. Residues 230–257 (KQEYHLVQPGITTCHDVHDTCESPLPFQ) lie on the Extracellular side of the membrane. A helical membrane pass occupies residues 258–278 (FYYFVSLAFFGFLIPFVVSVF). Residues 279 to 300 (CYTTLIHKLNAQDRKWLRYIKA) lie on the Cytoplasmic side of the membrane. Residues 301–321 (VLLILVIFTICFAPTNIILII) form a helical membrane-spanning segment. Residues 322-338 (HHANYYYSNTDSLYFMY) are Extracellular-facing. The chain crosses the membrane as a helical span at residues 339-359 (LIALCLGSLNSCLDPFLYFIM). Topologically, residues 360 to 368 (SKIVDQLTS) are cytoplasmic.

The protein belongs to the G-protein coupled receptor 1 family. In terms of assembly, interacts with INSC/inscuteable and GPSM2. A proteolytic cleavage generates a new N-terminus that functions as a tethered ligand.

It localises to the cell membrane. Its function is as follows. Receptor for activated thrombin coupled to G proteins that stimulate phosphoinositide hydrolysis. The sequence is that of Proteinase-activated receptor 3 (F2rl2) from Rattus norvegicus (Rat).